Here is a 237-residue protein sequence, read N- to C-terminus: uncharacterized protein (237 aa).

Residues 1-25 constitute a signal peptide (tat-type signal); it reads MRHIFQRLLPRRLWLAGLPCLALLG. Residues 201–237 form a disordered region; sequence IERQLSTRKPAGNFSPDTPHESEKPAPSTHEVTPDEP.

In terms of processing, exported by the Tat system. The position of the signal peptide cleavage has not been experimentally proven. Can also be exported by the Sec system.

This is an uncharacterized protein from Escherichia coli (strain K12).